A 402-amino-acid chain; its full sequence is Sulfate adenylyltransferase (402 aa).

The protein belongs to the sulfate adenylyltransferase family.

The catalysed reaction is sulfate + ATP + H(+) = adenosine 5'-phosphosulfate + diphosphate. Its pathway is sulfur metabolism; hydrogen sulfide biosynthesis; sulfite from sulfate: step 1/3. The sequence is that of Sulfate adenylyltransferase from Thiobacillus denitrificans (strain ATCC 25259 / T1).